A 183-amino-acid polypeptide reads, in one-letter code: uncharacterized protein (183 aa).

This sequence belongs to the asfivirus S183L family.

This is an uncharacterized protein from African swine fever virus (isolate Warthog/Namibia/Wart80/1980) (ASFV).